We begin with the raw amino-acid sequence, 758 residues long: Protein hunchback (758 aa).

2 disordered regions span residues 30 to 51 and 172 to 214; these read EPGH…PIPS and EKLQ…EDMK. Residues 39 to 51 show a composition bias toward polar residues; sequence SVASSPRQSPIPS. Thr178 bears the Phosphothreonine mark. 4 positions are modified to phosphoserine: Ser188, Ser207, Ser209, and Ser210. Residues 198 to 214 are compositionally biased toward basic and acidic residues; sequence EPEKEHDQMSNSSEDMK. C2H2-type zinc fingers lie at residues 240–262, 269–291, 297–319, and 325–349; these read YKCK…TRTH, LQCP…IRKH, FQCD…RKSH, and YRCA…KYGH. Disordered regions lie at residues 365 to 416 and 513 to 536; these read LVID…PVAT and QLQQ…YERK. Low complexity-rich tracts occupy residues 398–415 and 513–522; these read VAAV…QPVA and QLQQQNQQQS. Acidic residues predominate over residues 523 to 532; that stretch reads DNEEEEQDDE. Phosphoserine occurs at positions 537 and 540. The tract at residues 603 to 695 is disordered; that stretch reads MTSPEQLKVP…TTSAVAAPPS (93 aa). The span at 652–695 shows a compositional bias: low complexity; the sequence is ANTSASSTASSSGNSSNASSNSNGNSSSNSSSNGTTSAVAAPPS. C2H2-type zinc fingers lie at residues 705-727 and 733-757; these read YECK…MGYH and FKCN…RNAH.

The protein belongs to the hunchback C2H2-type zinc-finger protein family. As to expression, in embryo, expression of maternal transcript is highest in anterior region. Zygotic transcript is expressed in anterior region until the beginning of gastrulation and in posterior region until early gastrulation. After this, it is expressed in developing nervous system.

It is found in the nucleus. Functionally, gap class segmentation protein that controls development of head structures. The polypeptide is Protein hunchback (Drosophila melanogaster (Fruit fly)).